Here is a 405-residue protein sequence, read N- to C-terminus: Probable tRNA sulfurtransferase (405 aa).

The THUMP domain occupies 60–165 (TEVDKRLKKV…QDAVYISNQL (106 aa)). ATP is bound by residues 183-184 (ML), 208-209 (HF), arginine 265, glycine 287, and glutamine 296.

Belongs to the ThiI family.

The protein resides in the cytoplasm. It carries out the reaction [ThiI sulfur-carrier protein]-S-sulfanyl-L-cysteine + a uridine in tRNA + 2 reduced [2Fe-2S]-[ferredoxin] + ATP + H(+) = [ThiI sulfur-carrier protein]-L-cysteine + a 4-thiouridine in tRNA + 2 oxidized [2Fe-2S]-[ferredoxin] + AMP + diphosphate. The catalysed reaction is [ThiS sulfur-carrier protein]-C-terminal Gly-Gly-AMP + S-sulfanyl-L-cysteinyl-[cysteine desulfurase] + AH2 = [ThiS sulfur-carrier protein]-C-terminal-Gly-aminoethanethioate + L-cysteinyl-[cysteine desulfurase] + A + AMP + 2 H(+). It participates in cofactor biosynthesis; thiamine diphosphate biosynthesis. Catalyzes the ATP-dependent transfer of a sulfur to tRNA to produce 4-thiouridine in position 8 of tRNAs, which functions as a near-UV photosensor. Also catalyzes the transfer of sulfur to the sulfur carrier protein ThiS, forming ThiS-thiocarboxylate. This is a step in the synthesis of thiazole, in the thiamine biosynthesis pathway. The sulfur is donated as persulfide by IscS. This chain is Probable tRNA sulfurtransferase, found in Lactobacillus acidophilus (strain ATCC 700396 / NCK56 / N2 / NCFM).